Consider the following 53-residue polypeptide: Cytochrome c oxidase subunit 7e (53 aa).

In terms of assembly, slime mold cytochrome c oxidase consists of at least seven different polypeptides species, subunits I, II, III, IV, V, VI, and VIIe/s in order of MW.

It is found in the mitochondrion inner membrane. It catalyses the reaction 4 Fe(II)-[cytochrome c] + O2 + 8 H(+)(in) = 4 Fe(III)-[cytochrome c] + 2 H2O + 4 H(+)(out). In terms of biological role, this protein is one of the nuclear-coded polypeptide chains of cytochrome c oxidase, the terminal oxidase in mitochondrial electron transport. The sequence is that of Cytochrome c oxidase subunit 7e (cxgE) from Dictyostelium discoideum (Social amoeba).